Consider the following 121-residue polypeptide: Large ribosomal subunit protein uL14c (121 aa).

This sequence belongs to the universal ribosomal protein uL14 family. In terms of assembly, part of the 50S ribosomal subunit.

It localises to the plastid. The protein localises to the apicoplast. In terms of biological role, binds to 23S rRNA. The polypeptide is Large ribosomal subunit protein uL14c (rpl14) (Eimeria tenella (Coccidian parasite)).